We begin with the raw amino-acid sequence, 157 residues long: 6,7-dimethyl-8-ribityllumazine synthase 1 (157 aa).

5-amino-6-(D-ribitylamino)uracil-binding positions include phenylalanine 22, 53 to 55 (ALE), and 82 to 84 (TVI). A (2S)-2-hydroxy-3-oxobutyl phosphate-binding site is contributed by 87–88 (ET). Histidine 90 serves as the catalytic Proton donor. Residue asparagine 115 coordinates 5-amino-6-(D-ribitylamino)uracil. A (2S)-2-hydroxy-3-oxobutyl phosphate-binding site is contributed by histidine 129.

It belongs to the DMRL synthase family. As to quaternary structure, homopentamer.

The enzyme catalyses (2S)-2-hydroxy-3-oxobutyl phosphate + 5-amino-6-(D-ribitylamino)uracil = 6,7-dimethyl-8-(1-D-ribityl)lumazine + phosphate + 2 H2O + H(+). Its pathway is cofactor biosynthesis; riboflavin biosynthesis; riboflavin from 2-hydroxy-3-oxobutyl phosphate and 5-amino-6-(D-ribitylamino)uracil: step 1/2. Functionally, catalyzes the formation of 6,7-dimethyl-8-ribityllumazine by condensation of 5-amino-6-(D-ribitylamino)uracil with 3,4-dihydroxy-2-butanone 4-phosphate. This is the penultimate step in the biosynthesis of riboflavin. This chain is 6,7-dimethyl-8-ribityllumazine synthase 1 (ribH1), found in Brucella abortus (strain 2308).